A 139-amino-acid chain; its full sequence is MSFMREFKEFAMRGNVIDLAVGVIIGAAFGKIVDSLVKDIVMPVIGRLLGGVDFRHLYINLGDQTYETMEAAEKAGAPLVKYGQFINTTIDFLIIAFAIFVAVKAINRLKRSEPPPPPAPVEAEEVKLLREIRDTLKRG.

2 helical membrane passes run 16–36 and 83–103; these read VIDLAVGVIIGAAFGKIVDSL and GQFINTTIDFLIIAFAIFVAV.

This sequence belongs to the MscL family. Homopentamer.

Its subcellular location is the cell inner membrane. In terms of biological role, channel that opens in response to stretch forces in the membrane lipid bilayer. May participate in the regulation of osmotic pressure changes within the cell. The protein is Large-conductance mechanosensitive channel of Aromatoleum aromaticum (strain DSM 19018 / LMG 30748 / EbN1) (Azoarcus sp. (strain EbN1)).